The sequence spans 379 residues: RNA-splicing ligase RtcB2 (379 aa).

Mn(2+) is bound by residues aspartate 74, cysteine 77, histidine 137, histidine 168, and histidine 239. Residue 136 to 140 (NHFVE) participates in GMP binding. Residues 239-240 (HN), serine 277, 294-297 (HGAG), and lysine 372 contribute to the GMP site. Residue histidine 294 is the GMP-histidine intermediate of the active site.

Belongs to the RtcB family. RtcB2 subfamily. The cofactor is Mn(2+).

It catalyses the reaction a 3'-end 3'-phospho-ribonucleotide-RNA + a 5'-end dephospho-ribonucleoside-RNA + GTP = a ribonucleotidyl-ribonucleotide-RNA + GMP + diphosphate. GTP-dependent RNA ligase involved in rRNA repair. Repairs damaged 16S rRNA in 30S subunits that has been cleaved between adenine-1493 and guanosine-1494 (E.coli nubering). This specific cleavage is inflicted by CdiA (ECL_04451) or by colicin E3-type (ColE3) proteins. Poorly repairs damaged rRNA in the 70S ribosome; addition of release factor PrfH improves repair about 3-fold in vitro, probably because PrfH hydrolyzes the nascent chain allowing ribosomal subunit dissociation. In vivo the PrfH-RtcB2 pair restores growth in the presence of ribotoxins that specifically create this damage. Does not repair damaged tRNA (tested with tRNA(Asp) and tRNA(Arg)). The polypeptide is RNA-splicing ligase RtcB2 (Escherichia coli (strain ATCC 25922 / DSM 1103 / LMG 8223 / NCIMB 12210 / NCTC 12241 / WDCM 00013 / Seattle 1946)).